Reading from the N-terminus, the 347-residue chain is GDT1-like protein 2, chloroplastic (347 aa).

The N-terminal 12 residues, 1–12, are a transit peptide targeting the chloroplast; sequence MATAISVGVAVP. Residues 70–97 form a disordered region; it reads EAGSHGEHLDSSATRDSNKPTKPPSGSR. 7 helical membrane-spanning segments follow: residues 99–119, 124–144, 165–185, 196–216, 257–277, 299–319, and 327–347; these read PQSI…IVFF, SAVV…LIFV, ALVL…SVII, FQTT…FFGF, LTSP…AEWG, GAIA…AFLA, and VGLI…FGVF.

This sequence belongs to the GDT1 family.

It localises to the plastid. The protein localises to the chloroplast membrane. This is GDT1-like protein 2, chloroplastic from Oryza sativa subsp. japonica (Rice).